Here is a 312-residue protein sequence, read N- to C-terminus: Fibrinogen-like protein 1 (312 aa).

The N-terminal stretch at 1–22 (MAKMFSFILVTTALVMGRGSSA) is a signal peptide. A coiled-coil region spans residues 39–60 (LLETRVKQQQVKISQLLHEKQV). A Fibrinogen C-terminal domain is found at 74–306 (LGGKRQYADC…SVVMKIRPND (233 aa)). Cystine bridges form between cysteine 83–cysteine 112 and cysteine 248–cysteine 261.

In terms of assembly, homodimer. Interacts (via the Fibrinogen C-terminal domain) with LAG3 (via Ig-like domains 1 and 2).

It localises to the secreted. Functionally, immune suppressive molecule that inhibits antigen-specific T-cell activation by acting as a major ligand of LAG3. Responsible for LAG3 T-cell inhibitory function. Binds LAG3 independently from MHC class II (MHC-II). Secreted by, and promotes growth of, hepatocytes. This is Fibrinogen-like protein 1 (FGL1) from Bos taurus (Bovine).